We begin with the raw amino-acid sequence, 76 residues long: MSDIAERVKKIVAEQLGVKDEISNEASFVDDLGADSLDTVELVMALEEEFECEIPDEDAEKITTVQQAIDYIQSHT.

Residues 2–76 (SDIAERVKKI…QAIDYIQSHT (75 aa)) enclose the Carrier domain. The residue at position 36 (S36) is an O-(pantetheine 4'-phosphoryl)serine.

The protein belongs to the acyl carrier protein (ACP) family. 4'-phosphopantetheine is transferred from CoA to a specific serine of apo-ACP by AcpS. This modification is essential for activity because fatty acids are bound in thioester linkage to the sulfhydryl of the prosthetic group.

Its subcellular location is the cytoplasm. It participates in lipid metabolism; fatty acid biosynthesis. In terms of biological role, carrier of the growing fatty acid chain in fatty acid biosynthesis. In Methylococcus capsulatus (strain ATCC 33009 / NCIMB 11132 / Bath), this protein is Acyl carrier protein.